Reading from the N-terminus, the 206-residue chain is Ribosomal RNA small subunit methyltransferase G (206 aa).

S-adenosyl-L-methionine is bound by residues glycine 73, leucine 78, 124–125 (VE), and arginine 139.

This sequence belongs to the methyltransferase superfamily. RNA methyltransferase RsmG family.

The protein resides in the cytoplasm. It carries out the reaction guanosine(527) in 16S rRNA + S-adenosyl-L-methionine = N(7)-methylguanosine(527) in 16S rRNA + S-adenosyl-L-homocysteine. In terms of biological role, specifically methylates the N7 position of guanine in position 527 of 16S rRNA. The protein is Ribosomal RNA small subunit methyltransferase G of Edwardsiella ictaluri (strain 93-146).